Here is a 328-residue protein sequence, read N- to C-terminus: UDP-glucose 4-epimerase (328 aa).

NAD(+) contacts are provided by residues 20–21, 41–46, 57–58, 77–81, Ser-123, Tyr-149, and Lys-153; these read FV, VRHAVN, DI, and CAARA. Ser-123 and Tyr-149 together coordinate substrate. The Proton acceptor role is filled by Tyr-149. Substrate-binding positions include 198-199 and 215-217; these read GI and SIN.

The protein belongs to the NAD(P)-dependent epimerase/dehydratase family. As to quaternary structure, homodimer. The cofactor is NAD(+).

It carries out the reaction UDP-alpha-D-glucose = UDP-alpha-D-galactose. It participates in bacterial outer membrane biogenesis; LPS O-antigen biosynthesis. Involved in the metabolism of galactose. Catalyzes the conversion of UDP-galactose (UDP-Gal) to UDP-glucose (UDP-Glc) through a mechanism involving the transient reduction of NAD. This chain is UDP-glucose 4-epimerase (galE), found in Vibrio cholerae.